Here is a 664-residue protein sequence, read N- to C-terminus: Ent-copalyl diphosphate synthase 5 (664 aa).

Lys-101 is a binding site for substrate. Positions 233 and 235 each coordinate Mg(2+). The DXDD motif motif lies at 233-236; that stretch reads DIDD. Position 320 (Lys-320) interacts with substrate.

This sequence belongs to the terpene synthase family. Tpsc subfamily. Mg(2+) serves as cofactor. Ubiquitous expression in roots, stems, leaves and flowers.

The protein resides in the plastid. The protein localises to the chloroplast. It carries out the reaction (2E,6E,10E)-geranylgeranyl diphosphate = ent-copalyl diphosphate. The protein operates within secondary metabolite biosynthesis; terpenoid biosynthesis. Involved in the biosynthesis of ent-kaurene diterpenoids natural products such as oridonin, miltiradiene, eriocalyxin B and nezukol, known to exhibit antitumor, anti-inflammatory and antibacterial activities. Catalyzes the conversion of (2E,6E,10E)-geranylgeranyl diphosphate (GGPP) to ent-copalyl diphosphate (ent-CPP). In Isodon rubescens (Rabdosia rubescens), this protein is Ent-copalyl diphosphate synthase 5.